The chain runs to 506 residues: CDK5 regulatory subunit-associated protein 3 (506 aa).

Short sequence motifs (shuffled ATG8-binding motif) lie at residues 267–270 (IDWG), 292–295 (IDWG), and 310–313 (IDWG). The segment at 269 to 506 (WGDFGVEAVS…RPVNLMGTSL (238 aa)) is required for interaction with UFL1 and mediates interaction with CHEK1. Residues 355–370 (DELMELEIFLAQRAVE) are RPL10a-binding domain (RBD). Residue K450 forms a Glycyl lysine isopeptide (Lys-Gly) (interchain with G-Cter in SUMO2) linkage.

It belongs to the CDK5RAP3 family. In terms of assembly, substrate adapter component of the UFM1 ribosome E3 ligase (UREL) complex, composed of UFL1, DDRGK1 and CDK5RAP3. Interaction with UFL1 anchors CDK5RAP3 in the cytoplasm, preventing its translocation to the nucleus which allows expression of the CCND1 cyclin and progression of cells through the G1/S transition. Interacts with ATG8 family proteins MAP1LC3A, MAP1LC3B, GABARAP, GABARAPL1 and GABARAPL2. Interacts with CDK5R1; competes with CDK5RAP1 and CDK5RAP2. Interacts with RELA. Interacts with CHEK1; may negatively regulate CHEK1 and thereby stimulate entry into mitosis. Interacts with CDKN2A/ARF and MDM2; forms a ternary complex involved in regulation of p53/TP53. Interacts with MAPK14. Interacts with CCNB1. Interacts with TUBG1; may regulate CDK5RAP3 in mitotic G2/M transition checkpoint. (Microbial infection) Interacts with hepatitis B virus large envelope protein mutant pre-s2; promotes mitotic entry. Post-translationally, may be phosphorylated by CDK5. Ubiquitinated. Probably triggers proteasomal degradation and is negatively regulated by UFL1. In terms of processing, may be ufmylated. Post-translationally, cleaved by caspases early during apoptosis, the resulting peptides may play a role in rupture of the nuclear envelope. As to expression, ubiquitously expressed. Expressed in heart, brain, placenta, lung, liver, skeletal muscle, kidney and pancreas. Isoform 3 is expressed in kidney, liver, skeletal muscle and placenta.

It localises to the endoplasmic reticulum membrane. The protein resides in the cytoplasm. Its subcellular location is the nucleus. It is found in the cytoskeleton. The protein localises to the microtubule organizing center. It localises to the centrosome. Functionally, substrate adapter of E3 ligase complexes mediating ufmylation, the covalent attachment of the ubiquitin-like modifier UFM1 to substrate proteins, and which is involved in various processes, such as ribosome recycling and reticulophagy (also called ER-phagy). As part of the UREL complex, plays a key role in ribosome recycling by promoting mono-ufmylation of RPL26/uL24 subunit of the 60S ribosome. Ufmylation of RPL26/uL24 occurs on free 60S ribosomes following ribosome dissociation: it weakens the junction between post-termination 60S subunits and SEC61 translocons, promoting release and recycling of the large ribosomal subunit from the endoplasmic reticulum membrane. Ufmylation of RPL26/uL24 and subsequent 60S ribosome recycling either take place after normal termination of translation or after ribosome stalling during cotranslational translocation at the endoplasmic reticulum. Within the UREL complex, CDK5RAP3 acts as a substrate adapter that constrains UFL1 ligase activity to mono-ufmylate RPL26/uL24 at 'Lys-134'. The UREL complex is also involved in reticulophagy in response to endoplasmic reticulum stress by promoting ufmylation of proteins such as CYB5R3, thereby promoting lysosomal degradation of ufmylated proteins. Also acts as a regulator of transcription: negatively regulates NF-kappa-B-mediated gene transcription through the control of RELA phosphorylation. Also regulates mitotic G2/M transition checkpoint and mitotic G2 DNA damage checkpoint. Through its interaction with CDKN2A/ARF and MDM2 may induce MDM2-dependent p53/TP53 ubiquitination, stabilization and activation in the nucleus, thereby promoting G1 cell cycle arrest and inhibition of cell proliferation. May also play a role in the rupture of the nuclear envelope during apoptosis. May regulate MAPK14 activity by regulating its dephosphorylation by PPM1D/WIP1. Required for liver development. (Microbial infection) May be negatively regulated by hepatitis B virus large envelope protein mutant pre-s2 to promote mitotic entry. The protein is CDK5 regulatory subunit-associated protein 3 of Homo sapiens (Human).